The following is a 480-amino-acid chain: Heparin cofactor 2 (480 aa).

The first 19 residues, 1–19, serve as a signal peptide directing secretion; sequence MQHRPHLLLISLTIMSVCG. Asparagine 32 is a glycosylation site (N-linked (GlcNAc...) asparagine). A run of 2 repeats spans residues 56–66 and 70–80. Residues 56–80 are 2 X 11 AA approximate repeats, Asp/Glu-rich (acidic) (hirudin-like); it reads GEEDDDYLDLEKLLSEDDDYIDIID. Sulfotyrosine occurs at positions 62 and 75. The N-linked (GlcNAc...) asparagine glycan is linked to asparagine 169. The tract at residues 173–193 is glycosaminoglycan-binding site; the sequence is KYEILTIHNLFRKLTHRLFRR. Asparagine 368 and asparagine 404 each carry an N-linked (GlcNAc...) asparagine glycan.

It belongs to the serpin family. In terms of processing, N-glycosylated; different glycan composition appears to lead to two forms of this protein (56 and 60 kDa).

Functionally, thrombin inhibitor activated by the glycosaminoglycans, heparin or dermatan sulfate. In the presence of the latter, HC-II becomes the predominant thrombin inhibitor in place of antithrombin III (AT). This Oryctolagus cuniculus (Rabbit) protein is Heparin cofactor 2 (SERPIND1).